The primary structure comprises 318 residues: Acetyl-coenzyme A carboxylase carboxyl transferase subunit beta (318 aa).

One can recognise a CoA carboxyltransferase N-terminal domain in the interval 25–294 (LWSKCSECGT…AVKGELPAPA (270 aa)). Cysteine 29, cysteine 32, cysteine 48, and cysteine 51 together coordinate Zn(2+). The C4-type zinc finger occupies 29–51 (CSECGTMLFHRELSDNLNVCTNC). The disordered stretch occupies residues 286-318 (VKGELPAPAPLESDAETALASDTDPNGAPPSKD).

This sequence belongs to the AccD/PCCB family. In terms of assembly, acetyl-CoA carboxylase is a heterohexamer composed of biotin carboxyl carrier protein (AccB), biotin carboxylase (AccC) and two subunits each of ACCase subunit alpha (AccA) and ACCase subunit beta (AccD). Requires Zn(2+) as cofactor.

It localises to the cytoplasm. It carries out the reaction N(6)-carboxybiotinyl-L-lysyl-[protein] + acetyl-CoA = N(6)-biotinyl-L-lysyl-[protein] + malonyl-CoA. The protein operates within lipid metabolism; malonyl-CoA biosynthesis; malonyl-CoA from acetyl-CoA: step 1/1. Its function is as follows. Component of the acetyl coenzyme A carboxylase (ACC) complex. Biotin carboxylase (BC) catalyzes the carboxylation of biotin on its carrier protein (BCCP) and then the CO(2) group is transferred by the transcarboxylase to acetyl-CoA to form malonyl-CoA. The chain is Acetyl-coenzyme A carboxylase carboxyl transferase subunit beta from Jannaschia sp. (strain CCS1).